The chain runs to 136 residues: Large ribosomal subunit protein uL16c (136 aa).

The protein belongs to the universal ribosomal protein uL16 family. As to quaternary structure, part of the 50S ribosomal subunit.

The protein resides in the plastid. It is found in the chloroplast. In Mesostigma viride (Green alga), this protein is Large ribosomal subunit protein uL16c.